Consider the following 254-residue polypeptide: Mediator of RNA polymerase II transcription subunit 4 (254 aa).

Residues 72-114 (RVHQEMQSLEKEVEKRDSDIQQLQKQLKEAEHILATAVYQAKE) adopt a coiled-coil conformation. A disordered region spans residues 215–254 (ILPPHHGNDFGLEPPGHNKENEDDVEAMSTDSSSSSSDSD). Low complexity predominate over residues 243-254 (STDSSSSSSDSD).

Belongs to the Mediator complex subunit 4 family. In terms of assembly, component of the Mediator complex.

The protein resides in the nucleus. Functionally, component of the Mediator complex, a coactivator involved in the regulated transcription of nearly all RNA polymerase II-dependent genes. Mediator functions as a bridge to convey information from gene-specific regulatory proteins to the basal RNA polymerase II transcription machinery. Mediator is recruited to promoters by direct interactions with regulatory proteins and serves as a scaffold for the assembly of a functional preinitiation complex with RNA polymerase II and the general transcription factors. The protein is Mediator of RNA polymerase II transcription subunit 4 (med4) of Danio rerio (Zebrafish).